We begin with the raw amino-acid sequence, 94 residues long: Large ribosomal subunit protein uL23 (94 aa).

This sequence belongs to the universal ribosomal protein uL23 family. In terms of assembly, part of the 50S ribosomal subunit. Contacts protein L29, and trigger factor when it is bound to the ribosome.

Its function is as follows. One of the early assembly proteins it binds 23S rRNA. One of the proteins that surrounds the polypeptide exit tunnel on the outside of the ribosome. Forms the main docking site for trigger factor binding to the ribosome. In Mycoplasma mycoides subsp. mycoides SC (strain CCUG 32753 / NCTC 10114 / PG1), this protein is Large ribosomal subunit protein uL23.